We begin with the raw amino-acid sequence, 1135 residues long: Protocadherin-18 (1135 aa).

Residues M1–G27 form the signal peptide. Cadherin domains follow at residues K28 to F137, S138 to F246, E247 to I354, P361 to F465, Q466 to V576, and R582 to M688. Residues K28–S699 lie on the Extracellular side of the membrane. Residue N103 is glycosylated (N-linked (GlcNAc...) asparagine). 5 N-linked (GlcNAc...) asparagine glycosylation sites follow: N269, N420, N559, N583, and N641. Residues M700–F720 traverse the membrane as a helical segment. Over A721–S1135 the chain is Cytoplasmic. 4 disordered regions span residues L769 to Q800, S869 to R889, D942 to S1003, and Y1023 to T1046. Polar residues predominate over residues G791–Q800. The span at S869–S878 shows a compositional bias: basic and acidic residues. The tract at residues I893 to S1135 is interaction with DAB1. A compositionally biased stretch (basic and acidic residues) spans E1028–K1039.

Interacts with DAB1. Expressed in all tissues, with highest expression in lung and ovary.

The protein resides in the cell membrane. Potential calcium-dependent cell-adhesion protein. This Homo sapiens (Human) protein is Protocadherin-18 (PCDH18).